The following is a 463-amino-acid chain: V-type proton ATPase subunit S1 (463 aa).

Positions 1–32 (MMAATVVSRIRTGTRWAPVLWLLLSLVAVAAA) are cleaved as a signal peptide. A propeptide spanning residues 33-225 (VAAEQQVPLV…TAVRPSRVAR (193 aa)) is cleaved from the precursor. Residues 33–412 (VAAEQQVPLV…EQFSYASDCA (380 aa)) lie on the Lumenal side of the membrane. Asparagine 164, asparagine 255, asparagine 267, asparagine 290, asparagine 297, asparagine 344, asparagine 351, and asparagine 399 each carry an N-linked (GlcNAc...) asparagine glycan. A helical transmembrane segment spans residues 413–433 (GFFSPGIWMGLLTTLFMLFIF). The Cytoplasmic portion of the chain corresponds to 434–463 (TYGLHMILSLKTMDRFDDRKGPTITLTQIV).

This sequence belongs to the vacuolar ATPase subunit S1 family. As to quaternary structure, accessory component of the multisubunit proton-transporting vacuolar (V)-ATPase protein pump. Interacts (via N-terminus) with ATP6AP2 (via N-terminus). Interacts with RNASEK. Interacts with TMEM106B (via C-terminus). In terms of processing, N-glycosylated. In terms of tissue distribution, expressed in brain (at protein level).

It localises to the endoplasmic reticulum membrane. It is found in the endoplasmic reticulum-Golgi intermediate compartment membrane. The protein localises to the cytoplasmic vesicle. Its subcellular location is the secretory vesicle. The protein resides in the synaptic vesicle membrane. It localises to the clathrin-coated vesicle membrane. In terms of biological role, accessory subunit of the proton-transporting vacuolar (V)-ATPase protein pump, which is required for luminal acidification of secretory vesicles. Guides the V-type ATPase into specialized subcellular compartments, such as neuroendocrine regulated secretory vesicles or the ruffled border of the osteoclast, thereby regulating its activity. Involved in membrane trafficking and Ca(2+)-dependent membrane fusion. May play a role in the assembly of the V-type ATPase complex. In aerobic conditions, involved in intracellular iron homeostasis, thus triggering the activity of Fe(2+) prolyl hydroxylase (PHD) enzymes, and leading to HIF1A hydroxylation and subsequent proteasomal degradation. In islets of Langerhans cells, may regulate the acidification of dense-core secretory granules. In Rattus norvegicus (Rat), this protein is V-type proton ATPase subunit S1 (Atp6ap1).